We begin with the raw amino-acid sequence, 136 residues long: Histone H3.3 (136 aa).

Positions 1-43 (MARTKQTARKSTGGKAPRKQLATKAARKSAPSTGGVKKPHRYR) are disordered. Lys-5 is modified (N6,N6,N6-trimethyllysine; alternate). Position 5 is an N6,N6-dimethyllysine; alternate (Lys-5). Lys-5 and Lys-10 each carry N6-methyllysine; alternate. Residue Lys-10 is modified to N6-acetyllysine; alternate. Position 11 is a phosphoserine (Ser-11). An N6,N6-dimethyllysine; alternate modification is found at Lys-15. N6-acetyllysine; alternate occurs at positions 15, 19, 24, 28, and 37. N6-methyllysine; alternate occurs at positions 19, 24, 28, and 37. Lys-28 and Lys-37 each carry N6,N6,N6-trimethyllysine; alternate. Residues Lys-28 and Lys-37 each carry the N6,N6-dimethyllysine; alternate modification. Residues Lys-57 and Lys-65 each carry the N6-acetyllysine modification. Lys-80 carries the N6,N6,N6-trimethyllysine; alternate modification. Lys-80 carries the N6,N6-dimethyllysine; alternate modification. Position 80 is an N6-methyllysine; alternate (Lys-80).

It belongs to the histone H3 family. The nucleosome is a histone octamer containing two molecules each of H2A, H2B, H3 and H4 assembled in one H3-H4 heterotetramer and two H2A-H2B heterodimers. The octamer wraps approximately 147 bp of DNA. In terms of processing, phosphorylated at Ser-11. This is required for transcriptional activation through TBP recruitment to the promoters. Phosphorylation at Ser-11 also promotes subsequent acetylation at Lys-15. Post-translationally, mono-, di- and trimethylation of Lys-5 by the COMPASS complex activates gene expression by regulating transcription elongation and plays a role in telomere length maintenance. Lys-5 methylation enrichment correlates with transcription levels, and occurs in a 5' to 3' gradient with tri-methyl enrichment at the 5'-end of genes, shifting to di-methyl and then mono-methyl. The COMPASS mediated di and trimethylation of Lys-5 requires histone H2B monoubiquitination. Methylation of Lys-37 by SET2 represses gene expression. Methylation of Lys-80 by DOT1 is required for association of SIR proteins with telomeric regions and for telomeric silencing. Acetylation of histone H3 leads to transcriptional activation. Acetylation at Lys-15 is promoted by the phosphorylation at Ser-11. Acetylation at Lys-57 occurs predominantly in newly synthesized H3 molecule during G1, S and G2/M of the cell cycle and may be involved in DNA repair.

Its subcellular location is the nucleus. The protein resides in the chromosome. Its function is as follows. Core component of nucleosome. Nucleosomes wrap and compact DNA into chromatin, limiting DNA accessibility to the cellular machineries which require DNA as a template. Histones thereby play a central role in transcription regulation, DNA repair, DNA replication and chromosomal stability. DNA accessibility is regulated via a complex set of post-translational modifications of histones, also called histone code, and nucleosome remodeling. The polypeptide is Histone H3.3 (HHT3) (Trichinella pseudospiralis (Parasitic roundworm)).